A 348-amino-acid chain; its full sequence is Flagellar P-ring protein (348 aa).

Residues 1–16 form the signal peptide; it reads MRIFLLCLALSLSVFA.

The protein belongs to the FlgI family. As to quaternary structure, the basal body constitutes a major portion of the flagellar organelle and consists of four rings (L,P,S, and M) mounted on a central rod.

Its subcellular location is the periplasm. The protein resides in the bacterial flagellum basal body. Its function is as follows. Assembles around the rod to form the L-ring and probably protects the motor/basal body from shearing forces during rotation. The chain is Flagellar P-ring protein from Campylobacter lari (strain RM2100 / D67 / ATCC BAA-1060).